Consider the following 656-residue polypeptide: MPSRQLQILIRKTLPLVPDHVLIIGESGIAFSKATNLLGQEFEHILFDGRNGIHLEALAIAAGTLKMGGTLCLVLSDWENLSQQPDQDSLRWNGNQSAIATPNFIYHFKQCIERYHFPILREESAVEFPTVFYSNEHHKNATLAQQQIIENILQAEQDIYFLTAKRGRGKSALLGMLANQIQAPVYLTAPNKSAVHSVIEFSEGDIEFIAPDELALTLQTEPEFSQSAWLLVDEAAMIPLPLLQEYSRYFQHIVFSTTIHSYEGTGRGFELKFKRKIHRTFQHFELKQPLRWQENDPLEHFIDDLLLLNAEDDFQHFDYSNITYNIEENAKNLSFPCLRGKVPEGPKGDLDIASLPQALEALLTSKGSEGKYNRQFFFRDFYGLMTIAHYRTSPLDLRRLLDGKNQRFYFAEYQQNLLGAIWALEEGNMADDELIIQIQQGKRRPKGNLVPQALCFHENLSQACKLRSLRISRIAVQPNWQQKGIGQNLMQAMENADVDFLSVSFGYTDELAKFWQKCGFVLVHLGEHQEASSGCYSAIALKGISKEGLALVDTAYKQFQRNLPLSFHPFAINFEQNQLDWQLDDFDWMSLKNFANFHRTLFSSIPAMRRLLKLAGKENFPLISAYLTKKQFPINKKKGVECLRLEIKQYLERGTL.

ATP-binding positions include Gln-145, Gly-167–Met-176, and Arg-291. One can recognise an N-acetyltransferase domain in the interval Ser-368 to Lys-542. Residues Ile-474 to Val-476, Gln-481 to Gln-487, and Glu-510 each bind acetyl-CoA.

The protein belongs to the RNA cytidine acetyltransferase family. TmcA subfamily.

The protein localises to the cytoplasm. The catalysed reaction is cytidine(34) in elongator tRNA(Met) + acetyl-CoA + ATP + H2O = N(4)-acetylcytidine(34) in elongator tRNA(Met) + ADP + phosphate + CoA + H(+). Its function is as follows. Catalyzes the formation of N(4)-acetylcytidine (ac(4)C) at the wobble position of tRNA(Met), by using acetyl-CoA as an acetyl donor and ATP (or GTP). In Haemophilus influenzae (strain ATCC 51907 / DSM 11121 / KW20 / Rd), this protein is tRNA(Met) cytidine acetyltransferase TmcA.